The primary structure comprises 334 residues: D-aspartate oxidase 1 (334 aa).

FAD contacts are provided by Asp-35, Arg-36, Ser-43, Gly-307, and Thr-312. A Microbody targeting signal motif is present at residues 332 to 334 (SKL).

It belongs to the DAMOX/DASOX family. Requires FAD as cofactor. Expressed in the intestinal cells, hypodermis and in unidentified cells in the head in adult hermaphrodites.

The protein resides in the peroxisome matrix. It catalyses the reaction D-aspartate + O2 + H2O = oxaloacetate + H2O2 + NH4(+). The enzyme catalyses D-glutamate + O2 + H2O = H2O2 + 2-oxoglutarate + NH4(+). With respect to regulation, not inhibited by potassium bromide or thiolactomycin. In terms of biological role, selectively catalyzes the oxidative deamination of acidic amino acids. May play a role in the egg-laying events and early development of the worm, in addition to quality control of the germ cells. This chain is D-aspartate oxidase 1 (ddo-1), found in Caenorhabditis elegans.